Reading from the N-terminus, the 30-residue chain is Diuretic hormone 2 (30 aa).

Val30 carries the post-translational modification Valine amide.

Belongs to the sauvagine/corticotropin-releasing factor/urotensin I family.

The protein resides in the secreted. Its function is as follows. Regulation of fluid secretion. The sequence is that of Diuretic hormone 2 from Manduca sexta (Tobacco hawkmoth).